Consider the following 424-residue polypeptide: Histidine--tRNA ligase (424 aa).

The protein belongs to the class-II aminoacyl-tRNA synthetase family. In terms of assembly, homodimer.

It is found in the cytoplasm. The catalysed reaction is tRNA(His) + L-histidine + ATP = L-histidyl-tRNA(His) + AMP + diphosphate + H(+). The protein is Histidine--tRNA ligase of Sodalis glossinidius (strain morsitans).